We begin with the raw amino-acid sequence, 623 residues long: Protein EDS1L (623 aa).

Residue A2 is modified to N-acetylalanine. S123 acts as the Nucleophile in catalysis. Active-site charge relay system residues include D187 and H317.

Homodimer. Interacts with RPS4, RPS6, SNC1, SRFR1, AvrRps4 and HopA1. Interacts with PAD4 (via N-terminus). Interacts with SAG101. EDS1-SAG101 and EDS1-PAD4 form separate complexes in pathogen-unchallenged cells.

The protein resides in the nucleus. The protein localises to the cytoplasm. It localises to the microsome. Positive regulator of basal resistance and of effector-triggered immunity specifically mediated by TIR-NB-LRR resistance proteins. Disruption by bacterial effector of EDS1-TIR-NB-LRR resistance protein interactions constitutes the first step in resistance activation. Triggers early plant defenses and hypersensitive response independently of PAD4, and then recruits PAD4 to potentiate plant defenses through the accumulation of salicylic acid. Nuclear localization is essential for basal and TIR-NB-LRR-conditioned immunity and for reprogramming defense gene expression, while cytoplasmic EDS1 is required to induce a complete immune response. Heterodimerization with PAD4 or SGA101 is necessary for TNL-mediated effector-triggered immunity. Contributes to nonhost resistance against E.amylovora. Has no direct lipase activity. The protein is Protein EDS1L of Arabidopsis thaliana (Mouse-ear cress).